A 467-amino-acid chain; its full sequence is Uronate isomerase (467 aa).

Belongs to the metallo-dependent hydrolases superfamily. Uronate isomerase family.

The enzyme catalyses D-glucuronate = D-fructuronate. It carries out the reaction aldehydo-D-galacturonate = keto-D-tagaturonate. Its pathway is carbohydrate metabolism; pentose and glucuronate interconversion. The chain is Uronate isomerase from Flavobacterium johnsoniae (strain ATCC 17061 / DSM 2064 / JCM 8514 / BCRC 14874 / CCUG 350202 / NBRC 14942 / NCIMB 11054 / UW101) (Cytophaga johnsonae).